Consider the following 336-residue polypeptide: MKLSELLSAYSIETEFSNDFEVHALAELDKATPNDISYIDQVCYLKLLKDSKAGAVFIRKKESSKVPKSMQALIVDNPHLAFAKVSHAFKIPFFKNPQSVNEPKHFEKVTIMPNVVIGEGVEIGENSLIYPGVVIADGVKIGKNCILYPRVILYQNTILEDNVIIHAGSVIGGDGFGYAHTALGEHVKIEHVGIVRIQKNVEIGANTAIDRAVFGETLIKEGVKIDNLVQIGHNCVLGEHSIVVSQVGLSGSTTTGRNVVFGGQVGIGGHLHVGEFTQIGGKSAVGKDLPPNTNFAGAIPAMEIHEWHHFLAHLRTNFRKQQKTSLLQKAKGFFKS.

His233 (proton acceptor) is an active-site residue.

It belongs to the transferase hexapeptide repeat family. LpxD subfamily. Homotrimer.

The catalysed reaction is a UDP-3-O-[(3R)-3-hydroxyacyl]-alpha-D-glucosamine + a (3R)-hydroxyacyl-[ACP] = a UDP-2-N,3-O-bis[(3R)-3-hydroxyacyl]-alpha-D-glucosamine + holo-[ACP] + H(+). The protein operates within bacterial outer membrane biogenesis; LPS lipid A biosynthesis. Catalyzes the N-acylation of UDP-3-O-acylglucosamine using 3-hydroxyacyl-ACP as the acyl donor. Is involved in the biosynthesis of lipid A, a phosphorylated glycolipid that anchors the lipopolysaccharide to the outer membrane of the cell. The polypeptide is UDP-3-O-acylglucosamine N-acyltransferase (Helicobacter pylori (strain J99 / ATCC 700824) (Campylobacter pylori J99)).